Reading from the N-terminus, the 277-residue chain is Large ribosomal subunit protein uL2c (277 aa).

A disordered region spans residues 225–277 (MNPCDHPHGGGEGRSPIGRPKPVTPWGKPALGKKTRSPKRFSNKYIIRSRKMV). Basic residues predominate over residues 255–277 (LGKKTRSPKRFSNKYIIRSRKMV).

Belongs to the universal ribosomal protein uL2 family. Part of the 50S ribosomal subunit.

The protein localises to the plastid. The protein resides in the chloroplast. The polypeptide is Large ribosomal subunit protein uL2c (rpl2) (Euglena gracilis).